Here is a 36-residue protein sequence, read N- to C-terminus: U1-ectatotoxin-Et1b subunit B (36 aa).

Cysteine 11 and cysteine 33 are joined by a disulfide.

Belongs to the ectatomin family. Ectatomin-Et subfamily. Heterodimer of subunits A and B; disulfide-linked. In terms of tissue distribution, expressed by the venom gland.

The protein localises to the secreted. It is found in the target cell membrane. The protein is U1-ectatotoxin-Et1b subunit B of Ectatomma tuberculatum (Selva ant).